We begin with the raw amino-acid sequence, 168 residues long: Protein GRE1 (168 aa).

The interval 1-168 is disordered; the sequence is MSNLLNKFAD…DDDSGNQGVW (168 aa). Composition is skewed to basic and acidic residues over residues 8 to 20 and 27 to 43; these read FADK…HDER and DQTR…REFR. 2 stretches are compositionally biased toward polar residues: residues 56-81 and 120-144; these read NQGN…GNDF and TSGQ…SNIG.

It is found in the cytoplasm. This is Protein GRE1 (GRE1) from Saccharomyces cerevisiae (strain ATCC 204508 / S288c) (Baker's yeast).